The following is a 551-amino-acid chain: FGGY carbohydrate kinase domain-containing protein (551 aa).

The protein belongs to the FGGY kinase family. Expressed in kidney, lung and small intestine and to a lower extent in liver and detected in cerebrospinal fluid (at protein level).

The catalysed reaction is D-ribulose + ATP = D-ribulose 5-phosphate + ADP + H(+). The protein operates within carbohydrate metabolism; pentose and glucuronate interconversion. Its function is as follows. Catalyzes ATP-dependent phosphorylation of D-ribulose at C-5 to form D-ribulose 5-phosphate. Postulated to function in a metabolite repair mechanism by preventing toxic accumulation of free D-ribulose formed by non-specific phosphatase activities. Alternatively, may play a role in regulating D-ribulose 5-phosphate recycling in the pentose phosphate pathway. Can phosphorylate ribitol with low efficiency. This is FGGY carbohydrate kinase domain-containing protein from Homo sapiens (Human).